The following is a 346-amino-acid chain: Putative aquaporin-7B (346 aa).

The Cytoplasmic portion of the chain corresponds to 1–40 (MVQASGHRRSTRGSKMVSWSVIAKIQEIWCEEDERKMVRE). A helical membrane pass occupies residues 41-58 (FLAEFMSTYVMMVFGLGS). Residues 59–71 (VAHMVLNKTYGSY) are Extracellular-facing. Residues 72–89 (LGVNLGFGFGVTMGVHVA) form a helical membrane-spanning segment. Residues 90–93 (GRIS) lie on the Cytoplasmic side of the membrane. The segment at residues 94 to 107 (GAHMNAAVTFTNCA) is an intramembrane region (discontinuously helical). Residues 98-100 (NAA) carry the NPA 1 motif. Topologically, residues 108–115 (LGRVPWRK) are cytoplasmic. Residues 116 to 136 (FPVHVLGQFLGSFLAAATIYS) traverse the membrane as a helical segment. At 137 to 174 (LFYTAILHFSGGELMVTGPFATAGIFATYLPDHMTLWR) the chain is on the extracellular side. A helical transmembrane segment spans residues 175–192 (GFLNEEWLTRMLQLCLFT). The Cytoplasmic portion of the chain corresponds to 193–204 (ITDQENNPALPG). A helical transmembrane segment spans residues 205–221 (THALVISILVVIIRVSH). The Extracellular portion of the chain corresponds to 222-225 (GINT). Positions 226–239 (GYAINPSRDPPPSI) form an intramembrane region, discontinuously helical. An NPA 2 motif is present at residues 230–232 (NPS). At 240–257 (FTFIAGWGKQVFSDGENW) the chain is on the extracellular side. A helical membrane pass occupies residues 258-279 (WWVPVVAPLLGASLGGIIYLVF). The Cytoplasmic portion of the chain corresponds to 280-346 (IGSTIPREPL…LHESMALEHF (67 aa)).

Belongs to the MIP/aquaporin (TC 1.A.8) family. In terms of assembly, homotetramer; each monomer provides an independent glycerol/water pore.

It is found in the membrane. The enzyme catalyses glycerol(in) = glycerol(out). It catalyses the reaction H2O(in) = H2O(out). In terms of biological role, aquaglyceroporins form homotetrameric transmembrane channels, with each monomer independently mediating glycerol and water transport across the plasma membrane along their osmotic gradient. In Homo sapiens (Human), this protein is Putative aquaporin-7B.